The primary structure comprises 198 residues: Peptidyl-tRNA hydrolase (198 aa).

Residue Tyr14 coordinates tRNA. His19 functions as the Proton acceptor in the catalytic mechanism. Residues Tyr64, Asn66, and Asn113 each coordinate tRNA.

The protein belongs to the PTH family. Monomer.

Its subcellular location is the cytoplasm. It carries out the reaction an N-acyl-L-alpha-aminoacyl-tRNA + H2O = an N-acyl-L-amino acid + a tRNA + H(+). Functionally, hydrolyzes ribosome-free peptidyl-tRNAs (with 1 or more amino acids incorporated), which drop off the ribosome during protein synthesis, or as a result of ribosome stalling. Catalyzes the release of premature peptidyl moieties from peptidyl-tRNA molecules trapped in stalled 50S ribosomal subunits, and thus maintains levels of free tRNAs and 50S ribosomes. This Acidobacterium capsulatum (strain ATCC 51196 / DSM 11244 / BCRC 80197 / JCM 7670 / NBRC 15755 / NCIMB 13165 / 161) protein is Peptidyl-tRNA hydrolase.